We begin with the raw amino-acid sequence, 462 residues long: CCA-adding enzyme (462 aa).

Positions 54 and 57 each coordinate ATP. CTP is bound by residues serine 54 and arginine 57. Mg(2+)-binding residues include aspartate 66, aspartate 68, and aspartate 117. Residues histidine 140, lysine 160, and tyrosine 169 each coordinate ATP. Residues histidine 140, lysine 160, and tyrosine 169 each contribute to the CTP site.

The protein belongs to the tRNA nucleotidyltransferase/poly(A) polymerase family. Archaeal CCA-adding enzyme subfamily. As to quaternary structure, homodimer. Mg(2+) serves as cofactor.

It catalyses the reaction a tRNA precursor + 2 CTP + ATP = a tRNA with a 3' CCA end + 3 diphosphate. It carries out the reaction a tRNA with a 3' CCA end + 2 CTP + ATP = a tRNA with a 3' CCACCA end + 3 diphosphate. Its function is as follows. Catalyzes the addition and repair of the essential 3'-terminal CCA sequence in tRNAs without using a nucleic acid template. Adds these three nucleotides in the order of C, C, and A to the tRNA nucleotide-73, using CTP and ATP as substrates and producing inorganic pyrophosphate. tRNA 3'-terminal CCA addition is required both for tRNA processing and repair. Also involved in tRNA surveillance by mediating tandem CCA addition to generate a CCACCA at the 3' terminus of unstable tRNAs. While stable tRNAs receive only 3'-terminal CCA, unstable tRNAs are marked with CCACCA and rapidly degraded. The sequence is that of CCA-adding enzyme from Halorubrum lacusprofundi (strain ATCC 49239 / DSM 5036 / JCM 8891 / ACAM 34).